Reading from the N-terminus, the 209-residue chain is Na(+)-translocating NADH-quinone reductase subunit D (209 aa).

The next 5 helical transmembrane spans lie at 42-62 (VVMT…ISLI), 66-86 (IPNS…VIVV), 95-115 (FEIS…CIVM), 131-151 (FMDG…VGFL), and 178-198 (NGLF…IWAL).

The protein belongs to the NqrDE/RnfAE family. In terms of assembly, composed of six subunits; NqrA, NqrB, NqrC, NqrD, NqrE and NqrF.

It is found in the cell inner membrane. It carries out the reaction a ubiquinone + n Na(+)(in) + NADH + H(+) = a ubiquinol + n Na(+)(out) + NAD(+). NQR complex catalyzes the reduction of ubiquinone-1 to ubiquinol by two successive reactions, coupled with the transport of Na(+) ions from the cytoplasm to the periplasm. NqrA to NqrE are probably involved in the second step, the conversion of ubisemiquinone to ubiquinol. The protein is Na(+)-translocating NADH-quinone reductase subunit D of Serratia proteamaculans (strain 568).